The chain runs to 474 residues: tRNA-2-methylthio-N(6)-dimethylallyladenosine synthase (474 aa).

The MTTase N-terminal domain maps to 3-120 (KKLHIKTWGC…LPEMINSVRG (118 aa)). 6 residues coordinate [4Fe-4S] cluster: Cys12, Cys49, Cys83, Cys157, Cys161, and Cys164. Residues 143–375 (RAEGPTAFVS…QERINQQAMA (233 aa)) enclose the Radical SAM core domain. The 64-residue stretch at 378-441 (RRMLGTTQRI…PNSLRGKVVR (64 aa)) folds into the TRAM domain.

Belongs to the methylthiotransferase family. MiaB subfamily. As to quaternary structure, monomer. [4Fe-4S] cluster serves as cofactor.

The protein resides in the cytoplasm. It catalyses the reaction N(6)-dimethylallyladenosine(37) in tRNA + (sulfur carrier)-SH + AH2 + 2 S-adenosyl-L-methionine = 2-methylsulfanyl-N(6)-dimethylallyladenosine(37) in tRNA + (sulfur carrier)-H + 5'-deoxyadenosine + L-methionine + A + S-adenosyl-L-homocysteine + 2 H(+). It carries out the reaction N(6)-dimethylallyladenosine(37) in tRNA + (sulfur carrier)-SH + AH2 + S-adenosyl-L-methionine = 2-thio-N(6)-dimethylallyladenosine(37) in tRNA + (sulfur carrier)-H + 5'-deoxyadenosine + L-methionine + A + H(+). The catalysed reaction is 2-thio-N(6)-dimethylallyladenosine(37) in tRNA + S-adenosyl-L-methionine = 2-methylsulfanyl-N(6)-dimethylallyladenosine(37) in tRNA + S-adenosyl-L-homocysteine + H(+). Catalyzes the methylthiolation of N6-(dimethylallyl)adenosine (i(6)A), leading to the formation of 2-methylthio-N6-(dimethylallyl)adenosine (ms(2)i(6)A) at position 37 in tRNAs that read codons beginning with uridine. The chain is tRNA-2-methylthio-N(6)-dimethylallyladenosine synthase from Salmonella typhimurium (strain LT2 / SGSC1412 / ATCC 700720).